The following is a 142-amino-acid chain: Universal stress protein C (142 aa).

It belongs to the universal stress protein A family.

The protein localises to the cytoplasm. Required for resistance to DNA-damaging agents. The protein is Universal stress protein C (uspC) of Escherichia coli (strain K12).